Reading from the N-terminus, the 260-residue chain is Uridylate kinase (260 aa).

29–32 (KLSG) is an ATP binding site. The segment at 37-42 (GDLGYG) is involved in allosteric activation by GTP. Glycine 71 is a binding site for UMP. Positions 72 and 76 each coordinate ATP. Residues aspartate 91 and 152–159 (SGNPFFTT) each bind UMP. ATP is bound by residues threonine 179, tyrosine 185, and aspartate 188.

Belongs to the UMP kinase family. Homohexamer.

It is found in the cytoplasm. It catalyses the reaction UMP + ATP = UDP + ADP. Its pathway is pyrimidine metabolism; CTP biosynthesis via de novo pathway; UDP from UMP (UMPK route): step 1/1. Its activity is regulated as follows. Allosterically activated by GTP. Inhibited by UTP. Its function is as follows. Catalyzes the reversible phosphorylation of UMP to UDP. This Synechocystis sp. (strain ATCC 27184 / PCC 6803 / Kazusa) protein is Uridylate kinase.